Consider the following 73-residue polypeptide: DNA-directed RNA polymerase subunit epsilon (73 aa).

It belongs to the RNA polymerase subunit epsilon family. As to quaternary structure, RNAP is composed of a core of 2 alpha, a beta and a beta' subunit. The core is associated with a delta subunit, and at least one of epsilon or omega. When a sigma factor is associated with the core the holoenzyme is formed, which can initiate transcription.

The catalysed reaction is RNA(n) + a ribonucleoside 5'-triphosphate = RNA(n+1) + diphosphate. Its function is as follows. A non-essential component of RNA polymerase (RNAP). This is DNA-directed RNA polymerase subunit epsilon from Lactobacillus helveticus (strain DPC 4571).